The following is a 1218-amino-acid chain: NACHT, LRR and PYD domains-containing protein 1a allele 5 (1218 aa).

Residues 1–29 (MGESQSKQESNTRVAQHGSQQDVDPTFQT) show a composition bias toward polar residues. 2 disordered regions span residues 1–44 (MGES…QVEQ) and 71–91 (EMDH…DRSE). Over residues 77-87 (RRHSHQSKKKL) the composition is skewed to basic residues. Residues 175 to 484 (QLVIIEGAAG…EFFAAMSYIL (310 aa)) form the NACHT domain. 181–188 (GAAGIGKS) lines the ATP pocket. LRR repeat units follow at residues 343-364 (KERN…LTLC), 673-693 (NLEE…RSLC), and 730-750 (RLAE…RQLC). Over residues 799 to 815 (TMPTENTDGEESLTSSK) the composition is skewed to polar residues. Positions 799 to 842 (TMPTENTDGEESLTSSKQQQQQSGDKHMEPLGTDDDFWGPSGPV) are disordered. Positions 835 to 968 (FWGPSGPVST…HFAVLENPSF (134 aa)) are ZU5. The 284-residue stretch at 835-1118 (FWGPSGPVST…LRPALPRMAS (284 aa)) folds into the FIIND domain. The UPA stretch occupies residues 969 to 1118 (SPMGVLLRMI…LRPALPRMAS (150 aa)). Positions 1122-1211 (DAPALLHFVD…HLIMDLLEKS (90 aa)) constitute a CARD domain.

It belongs to the NLRP family. In terms of assembly, interacts (via LRR repeats) with BCL2 and BCL2L1 (via the loop between motifs BH4 and BH3). Interacts with NOD2; this interaction is enhanced in the presence of muramyl dipeptide (MDP) and increases IL1B release. Interacts with EIF2AK2/PKR; this interaction requires EIF2AK2 activity, is accompanied by EIF2AK2 autophosphorylation and promotes inflammasome assembly in response to danger-associated signals. Interacts with MEFV; this interaction targets Nlrp1a to degradation by autophagy, hence preventing excessive IL1B- and IL18-mediated inflammation. Interacts with DPP9; leading to inhibit activation of the inflammasome. DPP9 acts via formation of a ternary complex, composed of a DPP9 homodimer, one full-length NLRP1 protein, and one cleaved C-terminus of Nlrp1a (NACHT, LRR and PYD domains-containing protein 1a, C-terminus). Interacts with DPP8; leading to inhibit activation of the inflammasome, probably via formation of a ternary complex with DPP8. As to quaternary structure, interacts with the C-terminal part of Nlrp1a (NACHT, LRR and PYD domains-containing protein 1a, C-terminus) in absence of pathogens and other damage-associated signals. Interacts with the N-terminal part of Nlrp1a (NACHT, LRR and PYD domains-containing protein 1a, N-terminus) in absence of pathogens and other damage-associated signals. Homomultimer; forms the Nlrp1a inflammasome polymeric complex, a filament composed of homopolymers of this form in response to pathogens and other damage-associated signals. The Nlrp1a inflammasome polymeric complex directly recruits pro-caspase-1 (proCASP1) independently of PYCARD/ASC. Interacts (via CARD domain) with CASP1 (via CARD domain); leading to CASP1 activation. Post-translationally, autocatalytically cleaved. Autocatalytic cleavage in FIIND region occurs constitutively, prior to activation signals, and is required for inflammasome activity (IL1B release), possibly by facilitating CASP1 binding. Both N- and C-terminal parts remain associated non-covalently. Ubiquitinated in response to pathogen-associated signals, leading to its degradation by the proteasome and subsequent release of the cleaved C-terminal part of the protein (NACHT, LRR and PYD domains-containing protein 1a, C-terminus), which polymerizes and forms the Nlrp1a inflammasome.

The protein resides in the cytoplasm. It is found in the cytosol. It localises to the nucleus. The protein localises to the inflammasome. Its activity is regulated as follows. Activated by pathogens and other damage-associated signals: activation promotes ubiquitination and degradation of the N-terminal part, releasing the cleaved C-terminal part of the protein (NACHT, LRR and PYD domains-containing protein 1a, C-terminus), which polymerizes and forms the Nlrp1a inflammasome. Nlrp1a inflammasome is inhibited by DPP8 and DPP9, which sequester the C-terminal fragment of Nlrp1a (NACHT, LRR and PYD domains-containing protein 1a, C-terminus) in a ternary complex, thereby preventing Nlrp1a oligomerization and activation. Nlrp1a inflammasome is strongly activated by Val-boroPro (Talabostat, PT-100), an inhibitor of dipeptidyl peptidases DPP8 and DPP9. Val-boroPro relieves inhibition of DPP8 and/or DPP9 by promoting disruption of the ternary complex, releasing its C-terminal part from autoinhibition. Not activated by cleavage by B.anthracis lethal toxin (LT) endopeptidase. Highly activated by Toxoplasma gondii. In terms of biological role, acts as the sensor component of the Nlrp1a inflammasome, which mediates inflammasome activation in response to various pathogen-associated signals, leading to subsequent pyroptosis. Inflammasomes are supramolecular complexes that assemble in the cytosol in response to pathogens and other damage-associated signals and play critical roles in innate immunity and inflammation. Acts as a recognition receptor (PRR): recognizes specific pathogens and other damage-associated signals, such as Val-boroPro inhibitor, and mediates the formation of the inflammasome polymeric complex. In response to pathogen-associated signals, the N-terminal part of Nlrp1a is degraded by the proteasome, releasing the cleaved C-terminal part of the protein (NACHT, LRR and PYD domains-containing protein 1a, C-terminus), which polymerizes to initiate the formation of the inflammasome complex: the inflammasome directly recruits pro-caspase-1 (proCASP1) independently of PYCARD/ASC and promotes caspase-1 (CASP1) activation, which subsequently cleaves and activates inflammatory cytokines IL1B and IL18 and gasdermin-D (GSDMD), leading to pyroptosis. In the absence of GSDMD expression, the Nlrp1a inflammasome is able to recruit and activate CASP8, leading to activation of gasdermin-E (GSDME). Functionally, constitutes the precursor of the Nlrp1a inflammasome, which mediates autoproteolytic processing within the FIIND domain to generate the N-terminal and C-terminal parts, which are associated non-covalently in absence of pathogens and other damage-associated signals. Its function is as follows. Regulatory part that prevents formation of the Nlrp1a inflammasome: in absence of pathogens and other damage-associated signals, interacts with the C-terminal part of Nlrp1a (NACHT, LRR and PYD domains-containing protein 1a, C-terminus), preventing activation of the Nlrp1a inflammasome. In response to pathogen-associated signals, this part is ubiquitinated by the N-end rule pathway and degraded by the proteasome, releasing the cleaved C-terminal part of the protein, which polymerizes and forms the Nlrp1a inflammasome. Constitutes the active part of the Nlrp1a inflammasome. In absence of pathogens and other damage-associated signals, interacts with the N-terminal part of Nlrp1a (NACHT, LRR and PYD domains-containing protein 1a, N-terminus), preventing activation of the Nlrp1a inflammasome. In response to pathogen-associated signals, the N-terminal part of Nlrp1a is degraded by the proteasome, releasing this form, which polymerizes to form the Nlrp1a inflammasome complex: the Nlrp1a inflammasome complex then directly recruits pro-caspase-1 (proCASP1) and promotes caspase-1 (CASP1) activation, leading to gasdermin-D (GSDMD) cleavage and subsequent pyroptosis. This Rattus norvegicus (Rat) protein is NACHT, LRR and PYD domains-containing protein 1a allele 5.